We begin with the raw amino-acid sequence, 98 residues long: NADH-ubiquinone oxidoreductase chain 4L (98 aa).

The next 3 helical transmembrane spans lie at 1–21 (MIPTYMNIMLAFTISLLGMLT), 29–49 (SLLCLEGMMMSLFIMTTLIAL), and 61–81 (IILLVFAACEAAVGLALLVSI).

This sequence belongs to the complex I subunit 4L family. Core subunit of respiratory chain NADH dehydrogenase (Complex I) which is composed of 45 different subunits.

It localises to the mitochondrion inner membrane. It carries out the reaction a ubiquinone + NADH + 5 H(+)(in) = a ubiquinol + NAD(+) + 4 H(+)(out). Core subunit of the mitochondrial membrane respiratory chain NADH dehydrogenase (Complex I) which catalyzes electron transfer from NADH through the respiratory chain, using ubiquinone as an electron acceptor. Part of the enzyme membrane arm which is embedded in the lipid bilayer and involved in proton translocation. This is NADH-ubiquinone oxidoreductase chain 4L (MT-ND4L) from Macaca ochreata subsp. brunnescens (Muna-buton macaque).